The chain runs to 67 residues: Large ribosomal subunit protein bL32 (67 aa).

Positions 1-19 (MAVPKRKMSRSNTRARRSQ) are enriched in basic residues. Residues 1-21 (MAVPKRKMSRSNTRARRSQWK) are disordered.

This sequence belongs to the bacterial ribosomal protein bL32 family.

The polypeptide is Large ribosomal subunit protein bL32 (Clavibacter michiganensis subsp. michiganensis (strain NCPPB 382)).